A 521-amino-acid chain; its full sequence is Membrane-bound transcription factor site-2 protease (521 aa).

At 1–3 (MIP) the chain is on the cytoplasmic side. A helical transmembrane segment spans residues 4–24 (VSLVVVVVGGWTVVYLTDLVL). The Lumenal portion of the chain corresponds to 25 to 74 (KSSVYFKHSYEDWLESNGLSISPFHIRWQTAVFNRAFYSWGRRKARMLYQ). Transmembrane regions (helical) follow at residues 75-95 (WFNFGMVFGVIAMFSSFFLLG) and 96-107 (KTLMQTLAQMMA). The Lumenal portion of the chain corresponds to 108–146 (DSPSSYSSSSSSSSSSSSSSSSSSSSSSSSSLHNEQVLQ). The disordered stretch occupies residues 113 to 137 (YSSSSSSSSSSSSSSSSSSSSSSSS). A helical membrane pass occupies residues 147–171 (VVVPGINLPVNQLTYFFAAVLISGV). His173 contributes to the Zn(2+) binding site. Glu174 is an active-site residue. The next 3 membrane-spanning stretches (helical) occupy residues 176-188 (GHGIAAIREQVRF), 189-211 (NGFGIFLFIIYPGAFVDLFTTHL), and 231-253 (FVLALLGILALVLLPVILLPFYY). His177 lines the Zn(2+) pocket. The Lumenal segment spans residues 254–448 (TGVGVLITEV…LPVVVETFVK (195 aa)). A glycan (N-linked (GlcNAc...) asparagine) is linked at Asn339. 2 helical membrane passes run 449 to 466 (YLISLSGALAIVNAVPCF) and 467 to 478 (ALDGQWILNSFL). Residues 479–494 (DATLTSVIGDNDVKDL) are Lumenal-facing. The chain crosses the membrane as a helical span at residues 495 to 515 (IGFFILLGGSVLLAANVTLGL). The Cytoplasmic segment spans residues 516 to 521 (WMVTAR).

This sequence belongs to the peptidase M50A family. The cofactor is Zn(2+).

The protein resides in the membrane. It localises to the cytoplasm. It is found in the golgi apparatus membrane. It catalyses the reaction Cleaves several transcription factors that are type-2 transmembrane proteins within membrane-spanning domains. Known substrates include sterol regulatory element-binding protein (SREBP) -1, SREBP-2 and forms of the transcriptional activator ATF6. SREBP-2 is cleaved at the site 477-DRSRILL-|-CVLTFLCLSFNPLTSLLQWGGA-505. The residues Asn-Pro, 11 residues distal to the site of cleavage in the membrane-spanning domain, are important for cleavage by S2P endopeptidase. Replacement of either of these residues does not prevent cleavage, but there is no cleavage if both of these residues are replaced.. In terms of biological role, zinc metalloprotease that mediates intramembrane proteolysis of proteins such as ATF6, ATF6B, SREBF1/SREBP1 and SREBF2/SREBP2. Catalyzes the second step in the proteolytic activation of the sterol regulatory element-binding proteins (SREBPs) SREBF1/SREBP1 and SREBF2/SREBP2: cleaves SREBPs within the first transmembrane segment, thereby releasing the N-terminal segment with a portion of the transmembrane segment attached. Mature N-terminal SREBP fragments shuttle to the nucleus and activate gene transcription. Also mediates the second step in the proteolytic activation of the cyclic AMP-dependent transcription factor ATF-6 (ATF6 and ATF6B). Involved in intramembrane proteolysis during bone formation. In astrocytes and osteoblasts, upon DNA damage and ER stress, mediates the second step of the regulated intramembrane proteolytic activation of the transcription factor CREB3L1, leading to the inhibition of cell-cycle progression. This chain is Membrane-bound transcription factor site-2 protease (MBTPS2), found in Pongo abelii (Sumatran orangutan).